The following is a 208-amino-acid chain: Probable GTP-binding protein EngB (208 aa).

Residues 25–199 enclose the EngB-type G domain; it reads TGIEVAFAGR…RQKLDSWYNG (175 aa). Residues 33–40, 60–64, 78–81, 145–148, and 178–180 contribute to the GTP site; these read GRSNAGKS, GRTQL, DLPG, TKSD, and FSS. Residues S40 and T62 each contribute to the Mg(2+) site.

This sequence belongs to the TRAFAC class TrmE-Era-EngA-EngB-Septin-like GTPase superfamily. EngB GTPase family. Mg(2+) is required as a cofactor.

Functionally, necessary for normal cell division and for the maintenance of normal septation. This chain is Probable GTP-binding protein EngB, found in Enterobacter sp. (strain 638).